The sequence spans 137 residues: MSFKFGKNSEKQLATVKPELQKVARRALELSPYDFTIVQGIRTVAQSAQNIANGTSFLKDPSKSKHITGDAIDFAPYINGKIDWNDLEAFWAVKKAFEQAGKELGIKLRFGADWNASGDYHDEIKRGTYDGGHVELV.

Zn(2+) contacts are provided by H66, D73, and H133.

Belongs to the peptidase M15C family. The cofactor is Zn(2+).

Its function is as follows. Endolysin with L-alanyl-D-glutamate peptidase activity that degrades host peptidoglycans and participates with the holin in the sequential events which lead to the programmed host cell lysis releasing the mature viral particles. Once the holin has permeabilized the host cell membrane, the endolysin can reach the periplasm and break down the peptidoglycan layer by hydrolyzing the link between L-alanine and D-glutamate residues. In Escherichia coli (Enterobacteria phage T5), this protein is L-alanyl-D-glutamate peptidase (lys).